Here is a 288-residue protein sequence, read N- to C-terminus: Homoserine kinase (288 aa).

Position 78–88 (78–88) interacts with ATP; that stretch reads PLARGLGSSSS.

Belongs to the GHMP kinase family. Homoserine kinase subfamily.

The protein localises to the cytoplasm. The catalysed reaction is L-homoserine + ATP = O-phospho-L-homoserine + ADP + H(+). Its pathway is amino-acid biosynthesis; L-threonine biosynthesis; L-threonine from L-aspartate: step 4/5. In terms of biological role, catalyzes the ATP-dependent phosphorylation of L-homoserine to L-homoserine phosphate. The polypeptide is Homoserine kinase (Streptococcus agalactiae serotype V (strain ATCC BAA-611 / 2603 V/R)).